We begin with the raw amino-acid sequence, 129 residues long: Protein yippee-like At5g53940 (129 aa).

One can recognise a Yippee domain in the interval arginine 12–isoleucine 109. The Zn(2+) site is built by cysteine 16, cysteine 19, cysteine 72, and cysteine 75.

The protein belongs to the yippee family.

The protein is Protein yippee-like At5g53940 of Arabidopsis thaliana (Mouse-ear cress).